We begin with the raw amino-acid sequence, 391 residues long: Inactive polyketide synthase 2 (391 aa).

Cys164 is a catalytic residue.

This sequence belongs to the thiolase-like superfamily. Chalcone/stilbene synthases family. Homodimer.

This chain is Inactive polyketide synthase 2 (PKS2), found in Rubus idaeus (Raspberry).